Here is a 520-residue protein sequence, read N- to C-terminus: 2-isopropylmalate synthase (520 aa).

Positions 12-274 constitute a Pyruvate carboxyltransferase domain; sequence IRIFDTTLRD…DTAINTPRIV (263 aa). The Mn(2+) site is built by Asp-21, His-209, His-211, and Asn-245. Positions 396 to 520 are regulatory domain; it reads RLASMTISDV…VVAGKTAAVA (125 aa).

This sequence belongs to the alpha-IPM synthase/homocitrate synthase family. LeuA type 1 subfamily. In terms of assembly, homodimer. Mn(2+) serves as cofactor.

The protein localises to the cytoplasm. It catalyses the reaction 3-methyl-2-oxobutanoate + acetyl-CoA + H2O = (2S)-2-isopropylmalate + CoA + H(+). It participates in amino-acid biosynthesis; L-leucine biosynthesis; L-leucine from 3-methyl-2-oxobutanoate: step 1/4. Catalyzes the condensation of the acetyl group of acetyl-CoA with 3-methyl-2-oxobutanoate (2-ketoisovalerate) to form 3-carboxy-3-hydroxy-4-methylpentanoate (2-isopropylmalate). The sequence is that of 2-isopropylmalate synthase from Xanthomonas campestris pv. campestris (strain B100).